Consider the following 174-residue polypeptide: Transmembrane protein 208 (174 aa).

The next 3 helical transmembrane spans lie at asparagine 30 to threonine 50, valine 54 to methionine 74, and glycine 111 to isoleucine 131. Residues alanine 151–arginine 174 form a disordered region. The segment covering glutamine 163–arginine 174 has biased composition (basic residues).

This sequence belongs to the TMEM208 family. As to quaternary structure, interacts with fz. As to expression, expressed in the brain.

The protein resides in the endoplasmic reticulum membrane. Functionally, may play an important role during development and helps to maintain proper levels of Fz. The polypeptide is Transmembrane protein 208 (Drosophila melanogaster (Fruit fly)).